A 90-amino-acid chain; its full sequence is UPF0367 protein Ava_2513 (90 aa).

This sequence belongs to the UPF0367 family.

This Trichormus variabilis (strain ATCC 29413 / PCC 7937) (Anabaena variabilis) protein is UPF0367 protein Ava_2513.